We begin with the raw amino-acid sequence, 467 residues long: MSILLFGVSHRSAPVSVLEQLSLDRSDQIKIVDRVLQSPLVTEAMVLSTCNRVEVYAVVEAFHAGLSVIGQVLSEYSAMSIGDLTKYAYVRYSEAAVEHLFTVASGLDSAVVGEQQVLGQVRRAYAAAEANRTVGQVLHEVAQRALSVGKRVHSETAIDAAGVSVVSVALGIAGRTLGGLAGRIAVVIGAGAMGALSSSYLTQANVGRIHVLNRSLSRARRLAGKIGESGVPADVWTLNHLDEALADADLVVSCTGAVSPVVSLADVHHALAAMRRDETTRPLVICDLGMPRDVDPAVAKLPGVWVVDVEGVQREPSARASAADVDAARRIVAAEVATYLTRQRMAEVAPTVTALRQRAADVVEAELLRLDHRLPGLESAQREEVARTVRRVVDKLLHAPTVRIKQLASAPGGDSYTEALRELFELDQTAVDAVATAGELPVMVSGFSDTTRYGTSPAQSSSKYHAE.

Substrate-binding positions include 49–52 (TCNR), serine 109, 114–116 (EQQ), and glutamine 120. The Nucleophile role is filled by cysteine 50. An NADP(+)-binding site is contributed by 189–194 (GAGAMG). The segment at 446-467 (GFSDTTRYGTSPAQSSSKYHAE) is disordered. The segment covering 447–467 (FSDTTRYGTSPAQSSSKYHAE) has biased composition (polar residues).

This sequence belongs to the glutamyl-tRNA reductase family. Homodimer.

The catalysed reaction is (S)-4-amino-5-oxopentanoate + tRNA(Glu) + NADP(+) = L-glutamyl-tRNA(Glu) + NADPH + H(+). It participates in porphyrin-containing compound metabolism; protoporphyrin-IX biosynthesis; 5-aminolevulinate from L-glutamyl-tRNA(Glu): step 1/2. In terms of biological role, catalyzes the NADPH-dependent reduction of glutamyl-tRNA(Glu) to glutamate 1-semialdehyde (GSA). The chain is Glutamyl-tRNA reductase from Mycobacterium leprae (strain TN).